Reading from the N-terminus, the 975-residue chain is FHF complex subunit HOOK-interacting protein 1B (975 aa).

The interval 465–496 (APSPPRPEHASWARGPGSPSVDSSSVVTVPRP) is disordered. Position 467 is a phosphoserine (serine 467). Low complexity predominate over residues 482–496 (SPSVDSSSVVTVPRP). Phosphoserine is present on residues serine 510, serine 523, serine 529, and serine 533. Disordered regions lie at residues 511 to 548 (LGGS…GELE), 573 to 621 (SAPY…GLAV), and 690 to 717 (SNGG…SFTC). Residues 527-538 (TASPTSSPSRRP) are compositionally biased toward low complexity. The segment covering 597–608 (LLPEEDRDNVRE) has biased composition (basic and acidic residues). Position 863 is a phosphoserine (serine 863). Threonine 892 is subject to Phosphothreonine. Serine 900 bears the Phosphoserine mark.

Belongs to the FHIP family. Component of the FTS/Hook/FHIP complex (FHF complex), composed of AKTIP/FTS, FHIP1B, and one or more members of the Hook family of proteins HOOK1, HOOK2, and HOOK3. The FHF complex associates with the homotypic vesicular sorting complex (the HOPS complex).

Component of the FTS/Hook/FHIP complex (FHF complex). The FHF complex may function to promote vesicle trafficking and/or fusion via the homotypic vesicular protein sorting complex (the HOPS complex). FHF complex promotes the distribution of AP-4 complex to the perinuclear area of the cell. This Mus musculus (Mouse) protein is FHF complex subunit HOOK-interacting protein 1B.